Here is a 2507-residue protein sequence, read N- to C-terminus: Highly reducing polyketide synthase lcsB (2507 aa).

The Ketosynthase family 3 (KS3) domain occupies 2–393; sequence AEPIAVVGMA…GVNAHVIVES (392 aa). A disordered region spans residues 399 to 501; it reads NHDRGLSNGS…RNGYSGDDVE (103 aa). Polar residues-rich tracts occupy residues 405–414 and 470–488; these read SNGSTTSSSP and NDTP…TSHT. Residues 581–900 are malonyl-CoA:ACP transacylase (MAT) domain; the sequence is WVFTGQGAQW…DESLLQLAGK (320 aa). The interval 953-1080 is N-terminal hotdog fold; sequence HELLGSRVTE…GEARASVDKA (128 aa). Residues 953 to 1232 are dehydratase (DH) domain; the sequence is HELLGSRVTE…FKASALTRSD (280 aa). Residues 953 to 1234 enclose the PKS/mFAS DH domain; sequence HELLGSRVTE…ASALTRSDDE (282 aa). Residue H984 is the Proton acceptor; for dehydratase activity of the active site. The tract at residues 1092–1234 is C-terminal hotdog fold; it reads ARTVDANEWY…ASALTRSDDE (143 aa). D1151 (proton donor; for dehydratase activity) is an active-site residue. The interval 1402–1570 is methyltransferase (CMet) domain; that stretch reads LGHTNPRLRI…EMVAAGFAEP (169 aa). An enoyl reductase (ER) (ER) domain region spans residues 1793–2105; sequence GLLHTMGWSQ…GGRHIGKIIV (313 aa). The ketoreductase (KR) domain stretch occupies residues 2130–2303; sequence SYLLVGGLGG…ASVIDIGVMG (174 aa). Positions 2425 to 2503 constitute a Carrier domain; sequence EESTVIIATA…SLGDYIRTAL (79 aa). S2463 bears the O-(pantetheine 4'-phosphoryl)serine mark.

It functions in the pathway secondary metabolite biosynthesis. Highly reducing polyketide synthase; part of the gene cluster that mediates the biosynthesis of the lipopeptide antibiotics leucinostatins that show extensive biological activities, including antimalarial, antiviral, antibacterial, antifungal, and antitumor activities, as well as phytotoxic. Leucinostatin A contains nine amino acid residues, including the unusual amino acid 4-methyl-L-proline (MePro), 2-amino-6-hydroxy-4-methyl-8-oxodecanoic acid (AHyMeOA), 3-hydroxyleucine (HyLeu), alpha-aminoisobutyric acid (AIB), beta-Ala, a 4-methylhex-2-enoic acid at the N-terminus as well as a N1,N1-dimethylpropane-1,2-diamine (DPD) at the C-terminus. The biosynthesis of leucinostatins is probably initiated with the assembly of 4-methylhex-2-enoic acid by a reducing PKS. Two reducing polyketide synthases, lcsB and lcsC, have been identified in the cluster and it is not clear which is the one that assembles 4-methylhex-2-enoic acid since both contain KS, AT, DH, cMT, ER, KR and ACP domains. The polyketide residue might be transferred to the NRPS lcsA, mediated by two additional enzymes, the acyl-CoA ligase lcsD and the thioesterase lcsE. The linear polyketide carboxylic acid, which is released from PKS, is converted to a CoA thioester by lcsD, and then lcsE hydrolyzes the thiol bond and shuttles the polyketide intermediate to lcsA. The C domain of the first module catalyzed the condensation of 4-methylhex-2-enoic acid and MePro carried by domain A1, followed by successive condensations of nine amino acids to trigger the elongation of the linear peptide. A5 and A6 domains of lcsA are proposed to incorporate leucine, A2 AHyMeOA, and A3 incorporates HyLeu. A4, A7 and A8 incorporate AIB. The AHyMeOA in leucinostatin A activated by the A2 might be produced by the second PKS (lcsB or lcsC) present within the cluster. The MePro is probably produced via leucine cyclization and may originate from a separate pathway, independent of the cluster. Another nonproteinogenic amino acid, beta-Ala, could be produced by an aspartic acid decarboxylase also localized outside of the cluster. Two candidates are VFPBJ_01400 and VFPBJ_10476. The final peptide scaffold may be released by the NAD(P)H-dependent thioester reductase (TE) at the C-terminal region of lcsA. Transamination of the lcsA product by the transaminase lcsP may produce DPD at the C-terminus. Further hydroxylation steps performed alternatively by the cytochrome P450 monooxygenases lcsI, lcsK andr lcsN then yield the non-methylated leucinostatins precursor. It is also possible that leucines can be hydroxylated prior to their incorporation into the peptide. Varying extents of methylation then lead to the formation of leucinostatins A and B. The protein is Highly reducing polyketide synthase lcsB of Purpureocillium lilacinum (Paecilomyces lilacinus).